The following is a 184-amino-acid chain: NADH-quinone oxidoreductase subunit B (184 aa).

The [4Fe-4S] cluster site is built by Cys37, Cys38, Cys103, and Cys132. A disordered region spans residues 164-184; that stretch reads HEREEAAKHALPTHSMKGLLR.

This sequence belongs to the complex I 20 kDa subunit family. NDH-1 is composed of 14 different subunits. Subunits NuoB, C, D, E, F, and G constitute the peripheral sector of the complex. It depends on [4Fe-4S] cluster as a cofactor.

The protein localises to the cell membrane. It catalyses the reaction a quinone + NADH + 5 H(+)(in) = a quinol + NAD(+) + 4 H(+)(out). Functionally, NDH-1 shuttles electrons from NADH, via FMN and iron-sulfur (Fe-S) centers, to quinones in the respiratory chain. The immediate electron acceptor for the enzyme in this species is believed to be a menaquinone. Couples the redox reaction to proton translocation (for every two electrons transferred, four hydrogen ions are translocated across the cytoplasmic membrane), and thus conserves the redox energy in a proton gradient. In Acidothermus cellulolyticus (strain ATCC 43068 / DSM 8971 / 11B), this protein is NADH-quinone oxidoreductase subunit B.